Reading from the N-terminus, the 487-residue chain is Proline--tRNA ligase (487 aa).

Belongs to the class-II aminoacyl-tRNA synthetase family. ProS type 3 subfamily. In terms of assembly, homodimer.

The protein resides in the cytoplasm. The catalysed reaction is tRNA(Pro) + L-proline + ATP = L-prolyl-tRNA(Pro) + AMP + diphosphate. Catalyzes the attachment of proline to tRNA(Pro) in a two-step reaction: proline is first activated by ATP to form Pro-AMP and then transferred to the acceptor end of tRNA(Pro). The polypeptide is Proline--tRNA ligase (Pyrobaculum calidifontis (strain DSM 21063 / JCM 11548 / VA1)).